A 171-amino-acid polypeptide reads, in one-letter code: Adenine phosphoribosyltransferase (171 aa).

It belongs to the purine/pyrimidine phosphoribosyltransferase family. In terms of assembly, homodimer.

The protein localises to the cytoplasm. The enzyme catalyses AMP + diphosphate = 5-phospho-alpha-D-ribose 1-diphosphate + adenine. It participates in purine metabolism; AMP biosynthesis via salvage pathway; AMP from adenine: step 1/1. Catalyzes a salvage reaction resulting in the formation of AMP, that is energically less costly than de novo synthesis. In Acetivibrio thermocellus (strain ATCC 27405 / DSM 1237 / JCM 9322 / NBRC 103400 / NCIMB 10682 / NRRL B-4536 / VPI 7372) (Clostridium thermocellum), this protein is Adenine phosphoribosyltransferase.